Here is a 117-residue protein sequence, read N- to C-terminus: Large ribosomal subunit protein uL18 (117 aa).

This sequence belongs to the universal ribosomal protein uL18 family. As to quaternary structure, part of the 50S ribosomal subunit; part of the 5S rRNA/L5/L18/L25 subcomplex. Contacts the 5S and 23S rRNAs.

Its function is as follows. This is one of the proteins that bind and probably mediate the attachment of the 5S RNA into the large ribosomal subunit, where it forms part of the central protuberance. In Photobacterium profundum (strain SS9), this protein is Large ribosomal subunit protein uL18.